The following is a 336-amino-acid chain: 4-hydroxy-3-methylbut-2-enyl diphosphate reductase (336 aa).

C32 contacts [4Fe-4S] cluster. Positions 61 and 94 each coordinate (2E)-4-hydroxy-3-methylbut-2-enyl diphosphate. 2 residues coordinate dimethylallyl diphosphate: H61 and H94. H61 and H94 together coordinate isopentenyl diphosphate. C116 lines the [4Fe-4S] cluster pocket. H148 is a binding site for (2E)-4-hydroxy-3-methylbut-2-enyl diphosphate. Residue H148 participates in dimethylallyl diphosphate binding. H148 is a binding site for isopentenyl diphosphate. The Proton donor role is filled by E150. T189 serves as a coordination point for (2E)-4-hydroxy-3-methylbut-2-enyl diphosphate. C219 lines the [4Fe-4S] cluster pocket. Residues S247, S248, N249, and S292 each coordinate (2E)-4-hydroxy-3-methylbut-2-enyl diphosphate. Dimethylallyl diphosphate contacts are provided by S247, S248, N249, and S292. Residues S247, S248, N249, and S292 each coordinate isopentenyl diphosphate.

This sequence belongs to the IspH family. [4Fe-4S] cluster is required as a cofactor.

It catalyses the reaction isopentenyl diphosphate + 2 oxidized [2Fe-2S]-[ferredoxin] + H2O = (2E)-4-hydroxy-3-methylbut-2-enyl diphosphate + 2 reduced [2Fe-2S]-[ferredoxin] + 2 H(+). The enzyme catalyses dimethylallyl diphosphate + 2 oxidized [2Fe-2S]-[ferredoxin] + H2O = (2E)-4-hydroxy-3-methylbut-2-enyl diphosphate + 2 reduced [2Fe-2S]-[ferredoxin] + 2 H(+). It functions in the pathway isoprenoid biosynthesis; dimethylallyl diphosphate biosynthesis; dimethylallyl diphosphate from (2E)-4-hydroxy-3-methylbutenyl diphosphate: step 1/1. It participates in isoprenoid biosynthesis; isopentenyl diphosphate biosynthesis via DXP pathway; isopentenyl diphosphate from 1-deoxy-D-xylulose 5-phosphate: step 6/6. Functionally, catalyzes the conversion of 1-hydroxy-2-methyl-2-(E)-butenyl 4-diphosphate (HMBPP) into a mixture of isopentenyl diphosphate (IPP) and dimethylallyl diphosphate (DMAPP). Acts in the terminal step of the DOXP/MEP pathway for isoprenoid precursor biosynthesis. The sequence is that of 4-hydroxy-3-methylbut-2-enyl diphosphate reductase from Gluconobacter oxydans (strain 621H) (Gluconobacter suboxydans).